We begin with the raw amino-acid sequence, 537 residues long: ATP synthase subunit beta (537 aa).

The tract at residues 1 to 61 is disordered; sequence MAKAATSKKE…SSPQKGGKKG (61 aa). Positions 7–18 are enriched in basic and acidic residues; that stretch reads SKKEASKVEAKK. Over residues 44–55 the composition is skewed to polar residues; it reads NSPSRTGSSSPQ. Residue 209–216 coordinates ATP; it reads GGAGVGKT.

This sequence belongs to the ATPase alpha/beta chains family. F-type ATPases have 2 components, CF(1) - the catalytic core - and CF(0) - the membrane proton channel. CF(1) has five subunits: alpha(3), beta(3), gamma(1), delta(1), epsilon(1). CF(0) has three main subunits: a(1), b(2) and c(9-12). The alpha and beta chains form an alternating ring which encloses part of the gamma chain. CF(1) is attached to CF(0) by a central stalk formed by the gamma and epsilon chains, while a peripheral stalk is formed by the delta and b chains.

The protein localises to the cell inner membrane. It catalyses the reaction ATP + H2O + 4 H(+)(in) = ADP + phosphate + 5 H(+)(out). Its function is as follows. Produces ATP from ADP in the presence of a proton gradient across the membrane. The catalytic sites are hosted primarily by the beta subunits. The sequence is that of ATP synthase subunit beta from Bartonella bacilliformis (strain ATCC 35685 / KC583 / Herrer 020/F12,63).